The following is a 490-amino-acid chain: ATP synthase subunit beta, chloroplastic (490 aa).

170 to 177 (GGAGVGKT) is an ATP binding site.

Belongs to the ATPase alpha/beta chains family. In terms of assembly, F-type ATPases have 2 components, CF(1) - the catalytic core - and CF(0) - the membrane proton channel. CF(1) has five subunits: alpha(3), beta(3), gamma(1), delta(1), epsilon(1). CF(0) has four main subunits: a(1), b(1), b'(1) and c(9-12).

It localises to the plastid. It is found in the chloroplast thylakoid membrane. It catalyses the reaction ATP + H2O + 4 H(+)(in) = ADP + phosphate + 5 H(+)(out). Its function is as follows. Produces ATP from ADP in the presence of a proton gradient across the membrane. The catalytic sites are hosted primarily by the beta subunits. The polypeptide is ATP synthase subunit beta, chloroplastic (Ipomoea wrightii (Wright's morning glory)).